We begin with the raw amino-acid sequence, 554 residues long: Glutamine--tRNA ligase (554 aa).

Residues 34–44 (PEPNGYLHIGH) carry the 'HIGH' region motif. ATP is bound by residues 35–37 (EPN) and 41–47 (HIGHAKS). Residues D67 and Y212 each coordinate L-glutamine. Residues T231, 261–262 (RL), and 269–271 (MSK) contribute to the ATP site. The short motif at 268–272 (IMSKR) is the 'KMSKS' region element.

This sequence belongs to the class-I aminoacyl-tRNA synthetase family. Monomer.

It is found in the cytoplasm. It catalyses the reaction tRNA(Gln) + L-glutamine + ATP = L-glutaminyl-tRNA(Gln) + AMP + diphosphate. The protein is Glutamine--tRNA ligase of Serratia proteamaculans (strain 568).